The sequence spans 586 residues: Merlin (586 aa).

Ser9 carries the phosphoserine modification. Residues 18–307 (FTVRIVTMDA…GNHDLFMRRR (290 aa)) form the FERM domain. Positions 325–354 (KARKQMERQRLAREKQMREEAERSRDEPER) are disordered. Ser514 carries the post-translational modification Phosphoserine; by PAK. The interval 557-586 (LHSEHSDSGTSSKHNTIKKPQAQGRRPICI) is disordered.

As to quaternary structure, interacts with NHERF1, HGS and AGAP2. Interacts with SGSM3. Interacts (via FERM domain) with MPP1. Interacts with LAYN and WWC1. Interacts with the CUL4A-RBX1-DDB1-VprBP/DCAF1 E3 ubiquitin-protein ligase complex. The unphosphorylated form interacts (via FERM domain) with VPRBP/DCAF1. Interacts (via FERM domain) with NOP53; the interaction is direct. Interacts with SCHIP1; the interaction is direct. In terms of processing, ubiquitinated by the CUL4A-RBX1-DDB1-DCAF1/VprBP E3 ubiquitin-protein ligase complex for ubiquitination and subsequent proteasome-dependent degradation. Phosphorylation of Ser-514 inhibits nuclear localization by disrupting the intramolecular association of the FERM domain with the C-terminal tail. The dephosphorylation of Ser-514 favors the interaction with NOP53.

It is found in the cell membrane. Its subcellular location is the cell projection. The protein resides in the cytoplasm. It localises to the cytoskeleton. The protein localises to the nucleus. Functionally, probable regulator of the Hippo/SWH (Sav/Wts/Hpo) signaling pathway, a signaling pathway that plays a pivotal role in tumor suppression by restricting proliferation and promoting apoptosis. Along with WWC1 can synergistically induce the phosphorylation of LATS1 and LATS2 and can probably function in the regulation of the Hippo/SWH (Sav/Wts/Hpo) signaling pathway. May act as a membrane stabilizing protein. May inhibit PI3 kinase by binding to AGAP2 and impairing its stimulating activity. Suppresses cell proliferation and tumorigenesis by inhibiting the CUL4A-RBX1-DDB1-VprBP/DCAF1 E3 ubiquitin-protein ligase complex Plays a role in lens development and is required for complete fiber cell terminal differentiation, maintenance of cell polarity and separation of the lens vesicle from the corneal epithelium. This Rattus norvegicus (Rat) protein is Merlin (Nf2).